The primary structure comprises 264 residues: ATP synthase subunit a (264 aa).

6 consecutive transmembrane segments (helical) span residues 29 to 49 (TWHIDSLFFSVGLGVLFLWIF), 90 to 110 (IAPLALTIFMWVFMMNFMDMI), 134 to 154 (DVNITFSLAIGVFVLIIYYSI), 177 to 197 (IPVNLLLETVTLIAKPISLAL), 208 to 228 (LIFILIALMYGTNLLLSSLGV), and 235 to 255 (LIFHILVITLQAFIFMMLTIV).

It belongs to the ATPase A chain family. As to quaternary structure, F-type ATPases have 2 components, CF(1) - the catalytic core - and CF(0) - the membrane proton channel. CF(1) has five subunits: alpha(3), beta(3), gamma(1), delta(1), epsilon(1). CF(0) has three main subunits: a(1), b(2) and c(9-12). The alpha and beta chains form an alternating ring which encloses part of the gamma chain. CF(1) is attached to CF(0) by a central stalk formed by the gamma and epsilon chains, while a peripheral stalk is formed by the delta and b chains.

Its subcellular location is the cell inner membrane. Key component of the proton channel; it plays a direct role in the translocation of protons across the membrane. The chain is ATP synthase subunit a from Shewanella oneidensis (strain ATCC 700550 / JCM 31522 / CIP 106686 / LMG 19005 / NCIMB 14063 / MR-1).